A 620-amino-acid polypeptide reads, in one-letter code: Translocator protein BipB (620 aa).

Positions 58 to 95 are disordered; that stretch reads QCDAQPAAHDARLDDKPALRAPQERDAPPLGASDTGSR. Over residues 66 to 84 the composition is skewed to basic and acidic residues; sequence HDARLDDKPALRAPQERDA. A coiled-coil region spans residues 309-339; sequence EMQAKREAELQKKSDEYQAQVKKAEEMQKTM. 3 helical membrane-spanning segments follow: residues 355–375, 401–421, and 430–450; these read FAAAAFTGGASLALAAVGLAL, AILKPLMEMISSLITKALVAC, and LAGAILGAVVTGVALVAAAFV.

The protein belongs to the SctE/SipB/YopB family.

It localises to the secreted. Its subcellular location is the host membrane. Plays a role in the bacterium-induced formation of multinucleated giant cell (MNGC), which is formed after host cell fusion, as well as in the intercellular spreading of bacteria and in the induction of apoptosis in macrophages. May act in concert with other effector proteins to induce fusion of host cell membranes. The polypeptide is Translocator protein BipB (bipB) (Burkholderia pseudomallei (strain 1106a)).